The primary structure comprises 754 residues: Endothelin-converting enzyme 1 (754 aa).

Residues 1-52 (MMSTYKRATLDEEDLVDSLSESDVYPNHLQVNFRGPRNGQRCWAARTPVEKR) are Cytoplasmic-facing. Thr9 carries the phosphothreonine modification. A helical; Signal-anchor for type II membrane protein transmembrane segment spans residues 53 to 73 (LVVLVALLAAALVACLAVLGI). Residues 74–754 (QYQTRTPSVC…MNPHHKCEVW (681 aa)) lie on the Extracellular side of the membrane. A Peptidase M13 domain is found at 82 to 754 (VCLSEACISV…MNPHHKCEVW (673 aa)). 5 disulfide bridges follow: Cys83-Cys88, Cys106-Cys739, Cys114-Cys699, Cys169-Cys419, and Cys628-Cys751. Asn150, Asn171, Asn194, Asn254, Asn300, Asn346, Asn367, and Asn523 each carry an N-linked (GlcNAc...) asparagine glycan. His591 lines the Zn(2+) pocket. Glu592 is a catalytic residue. His595 contacts Zn(2+). N-linked (GlcNAc...) asparagine glycosylation is found at Asn616 and Asn635. A Zn(2+)-binding site is contributed by Glu651. Catalysis depends on Asp655, which acts as the Proton donor.

The protein belongs to the peptidase M13 family. In terms of assembly, homodimer; disulfide-linked. Interacts with PPP1R16B. Interacts with TSPAN8; this interaction recruits the endothelin converting enzyme ECE1 to tetraspanin-enriched microdomains and positively modulates its enzymatic activity. Zn(2+) is required as a cofactor.

The protein resides in the cell membrane. The enzyme catalyses Hydrolysis of the 21-Trp-|-Val-22 bond in big endothelin to form endothelin 1.. Inhibited by phosphoramidon. Converts big endothelin-1 to endothelin-1. The protein is Endothelin-converting enzyme 1 (ECE1) of Bos taurus (Bovine).